Reading from the N-terminus, the 86-residue chain is uncharacterized protein (86 aa).

It to C.jejuni CJ0253.

This is an uncharacterized protein from Helicobacter pylori (strain ATCC 700392 / 26695) (Campylobacter pylori).